Reading from the N-terminus, the 369-residue chain is NAD(P)H-quinone oxidoreductase subunit 1, chloroplastic (369 aa).

8 consecutive transmembrane segments (helical) span residues 29 to 49 (IWII…VLVI), 97 to 117 (IWLF…SYLV), 129 to 149 (LGIG…GLLM), 167 to 187 (AAQS…ISLL), 205 to 225 (LLGW…ISSL), 255 to 275 (FGLF…FVTV), 305 to 325 (IINA…FLFV), and 348 to 368 (FLLP…ILLL).

The protein belongs to the complex I subunit 1 family. In terms of assembly, NDH is composed of at least 16 different subunits, 5 of which are encoded in the nucleus.

The protein resides in the plastid. Its subcellular location is the chloroplast thylakoid membrane. The catalysed reaction is a plastoquinone + NADH + (n+1) H(+)(in) = a plastoquinol + NAD(+) + n H(+)(out). The enzyme catalyses a plastoquinone + NADPH + (n+1) H(+)(in) = a plastoquinol + NADP(+) + n H(+)(out). Functionally, NDH shuttles electrons from NAD(P)H:plastoquinone, via FMN and iron-sulfur (Fe-S) centers, to quinones in the photosynthetic chain and possibly in a chloroplast respiratory chain. The immediate electron acceptor for the enzyme in this species is believed to be plastoquinone. Couples the redox reaction to proton translocation, and thus conserves the redox energy in a proton gradient. This Angiopteris evecta (Mule's foot fern) protein is NAD(P)H-quinone oxidoreductase subunit 1, chloroplastic.